Here is a 181-residue protein sequence, read N- to C-terminus: Adenine phosphoribosyltransferase (181 aa).

The protein belongs to the purine/pyrimidine phosphoribosyltransferase family. Homodimer.

The protein resides in the cytoplasm. The enzyme catalyses AMP + diphosphate = 5-phospho-alpha-D-ribose 1-diphosphate + adenine. The protein operates within purine metabolism; AMP biosynthesis via salvage pathway; AMP from adenine: step 1/1. Functionally, catalyzes a salvage reaction resulting in the formation of AMP, that is energically less costly than de novo synthesis. The sequence is that of Adenine phosphoribosyltransferase from Vibrio parahaemolyticus serotype O3:K6 (strain RIMD 2210633).